Reading from the N-terminus, the 350-residue chain is MATTAAPAGGARNGAGPEWGGFEENIQGGGSAVIDMENMDDTSGSSFEDMGELHQRLREEEVDADAADAAAAEEEDGEFLGMKGFKGQLSRQVADQMWQAGKRQASRAFSLYANIDILRPYFDVEPAQVRSRLLESMIPIKMVNFPQKIAGELYGPLMLVFTLVAILLHGMKTSDTIIREGTLMGTAIGTCFGYWLGVSSFIYFLAYLCNAQITMLQMLALLGYGLFGHCIVLFITYNIHLHALFYLFWLLVGGLSTLRMVAVLVSRTVGPTQRLLLCGTLAALHMLFLLYLHFAYHKVVEGILDTLEGPNIPPIQRVPRDIPAMLPAARLPTTVLNATAKAVAVTLQSH.

The segment covering 1-10 (MATTAAPAGG) has biased composition (low complexity). Residues 1–51 (MATTAAPAGGARNGAGPEWGGFEENIQGGGSAVIDMENMDDTSGSSFEDMG) are disordered. A2 bears the N-acetylalanine mark. The Cytoplasmic segment spans residues 2 to 148 (ATTAAPAGGA…PIKMVNFPQK (147 aa)). Residues 149–169 (IAGELYGPLMLVFTLVAILLH) form a helical membrane-spanning segment. The Lumenal portion of the chain corresponds to 170–187 (GMKTSDTIIREGTLMGTA). Residues 188-208 (IGTCFGYWLGVSSFIYFLAYL) traverse the membrane as a helical segment. Residues 209 to 214 (CNAQIT) lie on the Cytoplasmic side of the membrane. Residues 215 to 237 (MLQMLALLGYGLFGHCIVLFITY) form a helical membrane-spanning segment. The Lumenal portion of the chain corresponds to 238-240 (NIH). The chain crosses the membrane as a helical span at residues 241–263 (LHALFYLFWLLVGGLSTLRMVAV). The Cytoplasmic portion of the chain corresponds to 264-274 (LVSRTVGPTQR). A helical membrane pass occupies residues 275–295 (LLLCGTLAALHMLFLLYLHFA). At 296-350 (YHKVVEGILDTLEGPNIPPIQRVPRDIPAMLPAARLPTTVLNATAKAVAVTLQSH) the chain is on the lumenal side. 2 O-linked (GalNAc...) threonine glycosylation sites follow: T333 and T334. Residue N337 is glycosylated (N-linked (GlcNAc...) asparagine). O-linked (GalNAc...) threonine glycans are attached at residues T339 and T346.

It belongs to the YIP1 family. Interacts with YIPF4 and YIPF5. N-glycosylated in the ER (40 kDa form I), then O-glycosylated in the Golgi apparatus (46 kDa form II), the C-terminal lumenal region is later removed in the Golgi apparatus to produce a 36 kDa form III. O-glycosylated with core 1-like and core 2-like glycans. O-glycan heterogeneity at Thr-346: HexNAc (minor), HexHexNAc (major), Hex1HexNAc2 (minor), Hex2HexNAc2 (minor) and dHex1Hex2HexNAc2 (minor). Expressed by nucleated hematopoietic cells (at protein level).

The protein resides in the cell membrane. It is found in the cytoplasm. Its subcellular location is the golgi apparatus. The protein localises to the cis-Golgi network membrane. In terms of biological role, involved in the maintenance of the Golgi structure. May play a role in hematopoiesis. This chain is Protein YIPF3 (YIPF3), found in Homo sapiens (Human).